The following is a 220-amino-acid chain: MPKFFCDYCDVYLTHDSISVRKAHNSGRNHLRNVVDYYQQIGHEKAQSVIDSITSSYAAEGQPMPSVHSTTPGAGGAGSVGAGGFPLLPPSAAAAAAAAGLQMPLSLPPPPFGFPARPGMMVPPPPPPFGFPPPPLGRGGAAAGFSGFPGMDAAGGGAGGGVQPQLLPGMVVPPGFVPPPGGMMVPPPGAGFTMPPPLGGFPAGAPLPGAPPGYGPPGAK.

The segment at phenylalanine 4–aspartate 36 adopts a Matrin-type zinc-finger fold. The disordered stretch occupies residues proline 197–lysine 220. Residues proline 208 to lysine 220 show a composition bias toward pro residues.

Belongs to the U1 small nuclear ribonucleoprotein C family. U1 snRNP is composed of the 7 core Sm proteins B/B', D1, D2, D3, E, F and G that assemble in a heptameric protein ring on the Sm site of the small nuclear RNA to form the core snRNP, and at least 3 U1 snRNP-specific proteins U1-70K, U1-A and U1-C. U1-C interacts with U1 snRNA and the 5' splice-site region of the pre-mRNA.

It is found in the nucleus. In terms of biological role, component of the spliceosomal U1 snRNP, which is essential for recognition of the pre-mRNA 5' splice-site and the subsequent assembly of the spliceosome. U1-C is directly involved in initial 5' splice-site recognition for both constitutive and regulated alternative splicing. The interaction with the 5' splice-site seems to precede base-pairing between the pre-mRNA and the U1 snRNA. Stimulates commitment or early (E) complex formation by stabilizing the base pairing of the 5' end of the U1 snRNA and the 5' splice-site region. In Tuber melanosporum (strain Mel28) (Perigord black truffle), this protein is U1 small nuclear ribonucleoprotein C.